Here is a 275-residue protein sequence, read N- to C-terminus: Ribosomal RNA small subunit methyltransferase A (275 aa).

S-adenosyl-L-methionine contacts are provided by Asn-19, Leu-21, Gly-46, Glu-71, Asp-94, and Asn-117.

This sequence belongs to the class I-like SAM-binding methyltransferase superfamily. rRNA adenine N(6)-methyltransferase family. RsmA subfamily.

Its subcellular location is the cytoplasm. It carries out the reaction adenosine(1518)/adenosine(1519) in 16S rRNA + 4 S-adenosyl-L-methionine = N(6)-dimethyladenosine(1518)/N(6)-dimethyladenosine(1519) in 16S rRNA + 4 S-adenosyl-L-homocysteine + 4 H(+). In terms of biological role, specifically dimethylates two adjacent adenosines (A1518 and A1519) in the loop of a conserved hairpin near the 3'-end of 16S rRNA in the 30S particle. May play a critical role in biogenesis of 30S subunits. In Burkholderia mallei (strain NCTC 10247), this protein is Ribosomal RNA small subunit methyltransferase A.